Here is a 297-residue protein sequence, read N- to C-terminus: Aspartate carbamoyltransferase catalytic subunit (297 aa).

Carbamoyl phosphate is bound by residues Arg-51 and Thr-52. Lys-79 provides a ligand contact to L-aspartate. Residues Arg-101, His-130, and Gln-133 each contribute to the carbamoyl phosphate site. L-aspartate contacts are provided by Arg-163 and Arg-215. Carbamoyl phosphate-binding residues include Gly-256 and Pro-257.

The protein belongs to the aspartate/ornithine carbamoyltransferase superfamily. ATCase family. Heterododecamer (2C3:3R2) of six catalytic PyrB chains organized as two trimers (C3), and six regulatory PyrI chains organized as three dimers (R2).

The enzyme catalyses carbamoyl phosphate + L-aspartate = N-carbamoyl-L-aspartate + phosphate + H(+). The protein operates within pyrimidine metabolism; UMP biosynthesis via de novo pathway; (S)-dihydroorotate from bicarbonate: step 2/3. In terms of biological role, catalyzes the condensation of carbamoyl phosphate and aspartate to form carbamoyl aspartate and inorganic phosphate, the committed step in the de novo pyrimidine nucleotide biosynthesis pathway. In Ehrlichia ruminantium (strain Gardel), this protein is Aspartate carbamoyltransferase catalytic subunit.